Consider the following 306-residue polypeptide: MPIKIPTELPAFKVLSNENIFVMNDSRAKTQDIRPLKIAILNLMPKKILAENQLLRHLSNTPLQVEVKLIQTKSYVSQNTPIEHLEKFYTYFDDIKEEKFDGLIITGAPVEQMEFEDITYWNELTEIMEWSKSNIFSTLHICWGAQAGLYYHYNIPKYKLENKISGVFSHWVNDENADLTRGLDDVFHVPHSRHTEVKKEDINKISELEILSESKEAGIFIVATKNRRKIFFMGHPEYDRNTLKEEYLRDREKGDDVEIPQNYFVDNDINSTPKFTWRGSSNIIFGNWLNYCVYQNTPYDINEISE.

Cys142 (acyl-thioester intermediate) is an active-site residue. 2 residues coordinate substrate: Lys163 and Ser192. Catalysis depends on His235, which acts as the Proton acceptor. Glu237 is a catalytic residue. Position 249 (Arg249) interacts with substrate.

This sequence belongs to the MetA family.

It localises to the cytoplasm. The enzyme catalyses L-homoserine + acetyl-CoA = O-acetyl-L-homoserine + CoA. It participates in amino-acid biosynthesis; L-methionine biosynthesis via de novo pathway; O-acetyl-L-homoserine from L-homoserine: step 1/1. Its function is as follows. Transfers an acetyl group from acetyl-CoA to L-homoserine, forming acetyl-L-homoserine. The sequence is that of Homoserine O-acetyltransferase from Clostridium botulinum (strain Alaska E43 / Type E3).